Reading from the N-terminus, the 246-residue chain is Proteasome subunit alpha (246 aa).

Belongs to the peptidase T1A family. In terms of assembly, the 20S proteasome core is composed of 14 alpha and 14 beta subunits that assemble into four stacked heptameric rings, resulting in a barrel-shaped structure. The two inner rings, each composed of seven catalytic beta subunits, are sandwiched by two outer rings, each composed of seven alpha subunits. The catalytic chamber with the active sites is on the inside of the barrel. Has a gated structure, the ends of the cylinder being occluded by the N-termini of the alpha-subunits. Is capped at one or both ends by the proteasome regulatory ATPase, PAN.

The protein resides in the cytoplasm. Its activity is regulated as follows. The formation of the proteasomal ATPase PAN-20S proteasome complex, via the docking of the C-termini of PAN into the intersubunit pockets in the alpha-rings, triggers opening of the gate for substrate entry. Interconversion between the open-gate and close-gate conformations leads to a dynamic regulation of the 20S proteasome proteolysis activity. Component of the proteasome core, a large protease complex with broad specificity involved in protein degradation. This Methanopyrus kandleri (strain AV19 / DSM 6324 / JCM 9639 / NBRC 100938) protein is Proteasome subunit alpha.